Here is a 216-residue protein sequence, read N- to C-terminus: Flavin-dependent thymidylate synthase (216 aa).

The region spanning 9-206 (GFVELVDVMG…PWTYEAFIKY (198 aa)) is the ThyX domain. Residues serine 55, 78 to 80 (RHR), and glutamate 86 each bind FAD. Residues 75-78 (QWFR), 86-90 (ELSGR), and arginine 145 contribute to the dUMP site. The ThyX motif motif lies at 78-88 (RHRIASYNELS). FAD is bound by residues 161–163 (NAR) and asparagine 167. Arginine 172 contributes to the dUMP binding site. Arginine 172 serves as the catalytic Involved in ionization of N3 of dUMP, leading to its activation.

This sequence belongs to the thymidylate synthase ThyX family. Homotetramer. FAD is required as a cofactor.

It catalyses the reaction dUMP + (6R)-5,10-methylene-5,6,7,8-tetrahydrofolate + NADPH + H(+) = dTMP + (6S)-5,6,7,8-tetrahydrofolate + NADP(+). Its pathway is pyrimidine metabolism; dTTP biosynthesis. Catalyzes the reductive methylation of 2'-deoxyuridine-5'-monophosphate (dUMP) to 2'-deoxythymidine-5'-monophosphate (dTMP) while utilizing 5,10-methylenetetrahydrofolate (mTHF) as the methyl donor, and NADPH and FADH(2) as the reductant. This is Flavin-dependent thymidylate synthase from Thermotoga neapolitana (strain ATCC 49049 / DSM 4359 / NBRC 107923 / NS-E).